The sequence spans 266 residues: Ribosome-recycling factor, chloroplastic (266 aa).

The segment covering 1 to 26 has biased composition (low complexity); the sequence is MPPLHAVSPAAAAAPPRALSSAARVP. The disordered stretch occupies residues 1 to 30; it reads MPPLHAVSPAAAAAPPRALSSAARVPQRPG. Residues 1 to 74 constitute a chloroplast transit peptide; that stretch reads MPPLHAVSPA…SDKRAVLRHA (74 aa). Coiled coils occupy residues 75–109 and 207–266; these read TIEE…NTVR and VAIR…LMKI.

Belongs to the RRF family.

It localises to the plastid. The protein resides in the chloroplast. Responsible for the release of ribosomes from messenger RNA at the termination of chloroplastic protein biosynthesis. The sequence is that of Ribosome-recycling factor, chloroplastic from Oryza sativa subsp. indica (Rice).